The following is an 82-amino-acid chain: U-scoloptoxin(21)-Sm3a (82 aa).

The N-terminal stretch at 1 to 21 (MKIIALLLMVFLDFIIVNXAE) is a signal peptide.

Belongs to the scoloptoxin-21 family. Expressed by the venom gland.

Its subcellular location is the secreted. The sequence is that of U-scoloptoxin(21)-Sm3a from Scolopendra morsitans (Tanzanian blue ringleg centipede).